Consider the following 754-residue polypeptide: uncharacterized protein (754 aa).

Catalysis depends on charge relay system residues Ser-585 and His-707. Positions 733–754 are disordered; the sequence is SHAPPPSRKARSAARRSTDPVR.

This sequence belongs to the peptidase S9A family.

This is an uncharacterized protein from Sinorhizobium fredii (strain NBRC 101917 / NGR234).